Here is a 504-residue protein sequence, read N- to C-terminus: 2,3-bisphosphoglycerate-independent phosphoglycerate mutase (504 aa).

Residues aspartate 11 and serine 61 each coordinate Mn(2+). Serine 61 acts as the Phosphoserine intermediate in catalysis. Substrate contacts are provided by residues histidine 122, 152–153 (RD), arginine 183, arginine 189, 255–258 (RNDR), and lysine 329. The Mn(2+) site is built by aspartate 396, histidine 400, aspartate 437, histidine 438, and histidine 455.

Belongs to the BPG-independent phosphoglycerate mutase family. As to quaternary structure, monomer. Mn(2+) serves as cofactor.

The catalysed reaction is (2R)-2-phosphoglycerate = (2R)-3-phosphoglycerate. The protein operates within carbohydrate degradation; glycolysis; pyruvate from D-glyceraldehyde 3-phosphate: step 3/5. Catalyzes the interconversion of 2-phosphoglycerate and 3-phosphoglycerate. This Bacteroides thetaiotaomicron (strain ATCC 29148 / DSM 2079 / JCM 5827 / CCUG 10774 / NCTC 10582 / VPI-5482 / E50) protein is 2,3-bisphosphoglycerate-independent phosphoglycerate mutase.